The chain runs to 134 residues: MSGKAHGGKGKSGAKDSGSLRSQSSSARAGLQFPVGRIKRYLKRHATGRTRVGSKAAIYLTAVLEYLTAEVLELAGNAAKDLKVKRITPRHLQLAIRGDDELDSLIRATIASGGVLPHINKALLLKVEKKGSKK.

A disordered region spans residues 1–31 (MSGKAHGGKGKSGAKDSGSLRSQSSSARAGL). Residue S2 is modified to N-acetylserine. N6-acetyllysine occurs at positions 4, 9, 11, and 15. The segment covering 15 to 31 (KDSGSLRSQSSSARAGL) has biased composition (low complexity). Residues 98–108 (GDDELDSLIRA) are interaction with VPS72.

The protein belongs to the histone H2A family. The nucleosome is a histone octamer containing two molecules each of H2A, H2B, H3 and H4 assembled in one H3-H4 heterotetramer and two H2A-H2B heterodimers. The octamer wraps approximately 147 bp of DNA. H2A or its variant H2A.Z forms a heterodimer with H2B. H2A.Z associates with the VPS72/SWC2 subunit of the SWR1 chromatin remodeling complex. Also interacts with RBP1/DNA-directed RNA polymerase II largest subunit. Interacts with NAP1. Interacts with MPS3. Acetylated by ESA1, a component of the NuA4 histone acetyltransferase (HAT) complex, and/or by GCN5, a component of the SAGA complex, to form H2A.ZK3Ac, H2A.ZK8Ac, H2A.ZK10Ac and H2A.ZK14Ac once deposited into chromatin. Acetylation is required for function at telomeres. H2A.ZK14Ac is acetylated at the promoters of active genes.

It localises to the nucleus. Its subcellular location is the chromosome. Variant histone H2A which can replace H2A in some nucleosomes. Nucleosomes wrap and compact DNA into chromatin, limiting DNA accessibility to the cellular machineries which require DNA as a template. Histones thereby play a central role in transcription regulation, DNA repair, DNA replication and chromosomal stability. DNA accessibility is regulated via a complex set of post-translational modifications of histones, also called histone code, and nucleosome remodeling. This variant is enriched at promoters, it may keep them in a repressed state until the appropriate activation signal is received. Near telomeres, it may counteract gene silencing caused by the spread of heterochromatin proteins. Required for the RNA polymerase II and SPT15/TBP recruitment to the target genes. Involved in chromosome stability. Required to target MPS3 to the inner membrane of the nuclear envelope. This is Histone H2A.Z from Saccharomyces cerevisiae (strain ATCC 204508 / S288c) (Baker's yeast).